Consider the following 1040-residue polypeptide: Multidrug resistance protein MdtB (1040 aa).

Helical transmembrane passes span 16 to 36, 347 to 367, 369 to 389, 396 to 416, 440 to 460, 472 to 492, 537 to 557, 863 to 883, 888 to 908, 911 to 931, 968 to 988, and 998 to 1018; these read FIMRPVATTLLMVAILLAGII, LMMAITLVVMIIYLFLRNIPA, IIPGVAVPLSLIGTFAVMVFL, LTLMALTIATGFVVDDAIVVI, IGFTIISLTFSLIAVLIPLLF, FAITLAVAILISAVVSLTLTP, WLTLSVALSTLLLSVLLWVFI, LGSTVWLIVAAVVAMYIVLGI, FIHPITILSTLPTAGVGALLA, IAGSELDVIAIIGIILLIGIV, ILMTTLAALLGALPLMLSTGV, and IGMVGGLIVSQVLTLFTTPVI.

The protein belongs to the resistance-nodulation-cell division (RND) (TC 2.A.6) family. MdtB subfamily. Part of a tripartite efflux system composed of MdtA, MdtB and MdtC. MdtB forms a heteromultimer with MdtC.

It localises to the cell inner membrane. The MdtABC tripartite complex confers resistance against novobiocin and deoxycholate. The sequence is that of Multidrug resistance protein MdtB from Escherichia coli O157:H7 (strain EC4115 / EHEC).